The following is a 359-amino-acid chain: Cytokine receptor-like factor 2 (359 aa).

A signal peptide spans 1 to 19 (MAWALAVILLPRLLAAAAA). At 20–232 (AAAVTSRGDV…PAPSPALAPP (213 aa)) the chain is on the extracellular side. An N-linked (GlcNAc...) asparagine glycan is attached at Asn53. Cys68 and Cys82 are oxidised to a cystine. In terms of domain architecture, Fibronectin type-III spans 119–213 (PPWNVTLLWT…WTAVTRLSGA (95 aa)). Asn122 is a glycosylation site (N-linked (GlcNAc...) asparagine). 2 disulfide bridges follow: Cys168/Cys169 and Cys181/Cys219. Positions 201 to 205 (PSEWT) match the WSXWS motif motif. Residues 233-253 (LLPLGCGLAALLTLSLLLAAL) traverse the membrane as a helical segment. The Cytoplasmic portion of the chain corresponds to 254–359 (RLRRVKDALL…MVGDSGYMTL (106 aa)). The short motif at 262–270 (LLPCVPDPS) is the Box 1 motif element. The disordered stretch occupies residues 312–336 (KRVEPEDGTSLCTVPRPPSFEPRGP).

This sequence belongs to the type I cytokine receptor family. Type 5 subfamily. The TSLP receptor is a heterodimer of CRLF2 and IL7R. Binding of TSLP to CRLF2/TSLPR is a mechanistic prerequisite for recruitment of IL7R to the high-affinity ternary complex. As to expression, high level of expression in liver, lung and testis. Also expressed in heart, brain, spleen, thymus and bone marrow. Highly expressed in progenitors and myeloid cells. Isoform 2 is expressed in primary hemotopoietic cells.

It localises to the cell membrane. The protein localises to the secreted. In terms of biological role, receptor for thymic stromal lymphopoietin (TSLP). Forms a functional complex with TSLP and IL7R which is capable of stimulating cell proliferation through activation of STAT3 and STAT5. Also activates JAK2. Implicated in the development of the hematopoietic system. This chain is Cytokine receptor-like factor 2 (Crlf2), found in Mus musculus (Mouse).